The following is a 410-amino-acid chain: MGICLSAQVKAESSGASTKYDAKDIGSLGSKASSVSVRPSPRTEGEILQSPNLKSFSFAELKSATRNFRPDSVLGEGGFGCVFKGWIDEKSLTASRPGTGLVIAVKKLNQDGWQGHQEWLAEVNYLGQFSHRHLVKLIGYCLEDEHRLLVYEFMPRGSLENHLFRRGLYFQPLSWKLRLKVALGAAKGLAFLHSSETRVIYRDFKTSNILLDSEYNAKLSDFGLAKDGPIGDKSHVSTRVMGTHGYAAPEYLATGHLTTKSDVYSFGVVLLELLSGRRAVDKNRPSGERNLVEWAKPYLVNKRKIFRVIDNRLQDQYSMEEACKVATLSLRCLTTEIKLRPNMSEVVSHLEHIQSLNAAIGGNMDKTDRRMRRRSDSVVSKKVNAGFARQTAVGSTVVAYPRPSASPLYV.

A lipid anchor (N-myristoyl glycine) is attached at Gly-2. Cys-4 carries the S-palmitoyl cysteine lipid modification. A disordered region spans residues Ala-11–Glu-46. Positions Phe-68–His-352 constitute a Protein kinase domain. Residues Leu-74–Val-82 and Lys-106 each bind ATP. Residue Tyr-151 is modified to Phosphotyrosine. The Proton acceptor role is filled by Asp-203. 2 positions are modified to phosphoserine: Ser-207 and Ser-237. Thr-238 and Thr-243 each carry phosphothreonine. A Phosphotyrosine modification is found at Tyr-251.

The protein belongs to the protein kinase superfamily. Ser/Thr protein kinase family. As to quaternary structure, interacts with the Xanthomonas campestris effector XopAC/AvrAC. As to expression, expressed in stomatal guard cells of leaves.

The protein localises to the cell membrane. The enzyme catalyses L-seryl-[protein] + ATP = O-phospho-L-seryl-[protein] + ADP + H(+). It catalyses the reaction L-threonyl-[protein] + ATP = O-phospho-L-threonyl-[protein] + ADP + H(+). In terms of biological role, possible bi-functional kinase. In vitro, it exhibits serine/threonine activity. In vivo, can phosphorylate tyrosine residues of limited substrates. May be involved in plant defense signaling. This is Probable serine/threonine-protein kinase PBL9 from Arabidopsis thaliana (Mouse-ear cress).